The chain runs to 126 residues: NADPH-dependent 7-cyano-7-deazaguanine reductase (126 aa).

The Thioimide intermediate role is filled by cysteine 40. The Proton donor role is filled by aspartate 47. Substrate contacts are provided by residues 62–64 (IEL) and 81–82 (HE).

This sequence belongs to the GTP cyclohydrolase I family. QueF type 1 subfamily.

Its subcellular location is the cytoplasm. It catalyses the reaction 7-aminomethyl-7-carbaguanine + 2 NADP(+) = 7-cyano-7-deazaguanine + 2 NADPH + 3 H(+). It participates in tRNA modification; tRNA-queuosine biosynthesis. Catalyzes the NADPH-dependent reduction of 7-cyano-7-deazaguanine (preQ0) to 7-aminomethyl-7-deazaguanine (preQ1). In Campylobacter jejuni subsp. doylei (strain ATCC BAA-1458 / RM4099 / 269.97), this protein is NADPH-dependent 7-cyano-7-deazaguanine reductase.